Reading from the N-terminus, the 212-residue chain is Interleukin-6 (212 aa).

The N-terminal stretch at 1-29 (MTSFSTSAFRPVAFSLGLLLVMPAAFPAP) is a signal peptide. Cysteines 72 and 78 form a disulfide. Asparagine 73 carries an N-linked (GlcNAc...) asparagine glycan. The residue at position 81 (serine 81) is a Phosphoserine. Cysteine 101 and cysteine 111 are oxidised to a cystine. Residues asparagine 160 and asparagine 172 are each glycosylated (N-linked (GlcNAc...) asparagine).

Belongs to the IL-6 superfamily. In terms of assembly, component of a hexamer of two molecules each of IL6, IL6R and IL6ST; first binds to IL6R to associate with the signaling subunit IL6ST. Interacts with IL6R (via the N-terminal ectodomain); this interaction may be affected by IL6R-binding with SORL1, hence decreasing IL6 cis signaling. Interacts with SORL1 (via the N-terminal ectodomain); this interaction leads to IL6 internalization and lysosomal degradation. May form a trimeric complex with the soluble SORL1 ectodomain and soluble IL6R receptor; this interaction might stabilize circulating IL6, hence promoting IL6 trans signaling.

The protein resides in the secreted. Cytokine with a wide variety of biological functions in immunity, tissue regeneration, and metabolism. Binds to IL6R, then the complex associates to the signaling subunit IL6ST/gp130 to trigger the intracellular IL6-signaling pathway. The interaction with the membrane-bound IL6R and IL6ST stimulates 'classic signaling', whereas the binding of IL6 and soluble IL6R to IL6ST stimulates 'trans-signaling'. Alternatively, 'cluster signaling' occurs when membrane-bound IL6:IL6R complexes on transmitter cells activate IL6ST receptors on neighboring receiver cells. Its function is as follows. IL6 is a potent inducer of the acute phase response. Rapid production of IL6 contributes to host defense during infection and tissue injury, but excessive IL6 synthesis is involved in disease pathology. In the innate immune response, is synthesized by myeloid cells, such as macrophages and dendritic cells, upon recognition of pathogens through toll-like receptors (TLRs) at the site of infection or tissue injury. In the adaptive immune response, is required for the differentiation of B cells into immunoglobulin-secreting cells. Plays a major role in the differentiation of CD4(+) T cell subsets. Essential factor for the development of T follicular helper (Tfh) cells that are required for the induction of germinal-center formation. Required to drive naive CD4(+) T cells to the Th17 lineage. Also required for proliferation of myeloma cells and the survival of plasmablast cells. In terms of biological role, acts as an essential factor in bone homeostasis and on vessels directly or indirectly by induction of VEGF, resulting in increased angiogenesis activity and vascular permeability. Induces, through 'trans-signaling' and synergistically with IL1B and TNF, the production of VEGF. Involved in metabolic controls, is discharged into the bloodstream after muscle contraction increasing lipolysis and improving insulin resistance. 'Trans-signaling' in central nervous system also regulates energy and glucose homeostasis. Mediates, through GLP-1, crosstalk between insulin-sensitive tissues, intestinal L cells and pancreatic islets to adapt to changes in insulin demand. Also acts as a myokine. Plays a protective role during liver injury, being required for maintenance of tissue regeneration. Also has a pivotal role in iron metabolism by regulating HAMP/hepcidin expression upon inflammation or bacterial infection. Through activation of IL6ST-YAP-NOTCH pathway, induces inflammation-induced epithelial regeneration. This Saimiri sciureus (Common squirrel monkey) protein is Interleukin-6 (IL6).